A 215-amino-acid chain; its full sequence is Beta-crystallin A3 (215 aa).

Position 1 is an N-acetylmethionine (Met1). Low complexity predominate over residues 1 to 16 (METQAEQQELETLPTT). Residues 1–29 (METQAEQQELETLPTTKMAQTNPTPGSLG) are disordered. The tract at residues 1–30 (METQAEQQELETLPTTKMAQTNPTPGSLGP) is N-terminal arm. Residue Glu2 is modified to N-acetylalanine. 2 consecutive Beta/gamma crystallin 'Greek key' domains span residues 31–70 (WKITIYDQENFQGKRMEFTSSCPNVSERSFDNVRSLKVES) and 71–117 (GAWI…RPIC). Cys82 and Cys117 each carry S-glutathionyl cysteine; alternate. An S-methylcysteine; alternate mark is found at Cys82 and Cys117. A connecting peptide region spans residues 118–123 (SANHKE). 2 consecutive Beta/gamma crystallin 'Greek key' domains span residues 124–165 (SKMT…KIQS) and 166–214 (GAWV…RRIQ). Cys185 bears the S-methylcysteine mark.

It belongs to the beta/gamma-crystallin family. As to quaternary structure, homo/heterodimer, or complexes of higher-order. The structure of beta-crystallin oligomers seems to be stabilized through interactions between the N-terminal arms. Interacts with CRYBA1. Specific cleavages in the N-terminal arm occur during lens maturation and give rise to several truncated forms. Cleavages do not seem to have adverse effects on solubility. Post-translationally, S-methylation and glutathionylation occur in normal young lenses and do not seem to be detrimental.

Functionally, crystallins are the dominant structural components of the vertebrate eye lens. In Homo sapiens (Human), this protein is Beta-crystallin A3.